The following is a 250-amino-acid chain: Hydroxyacylglutathione hydrolase (250 aa).

The Zn(2+) site is built by His-53, His-55, Asp-57, His-58, His-110, Asp-127, and His-165.

Belongs to the metallo-beta-lactamase superfamily. Glyoxalase II family. In terms of assembly, monomer. Requires Zn(2+) as cofactor.

The catalysed reaction is an S-(2-hydroxyacyl)glutathione + H2O = a 2-hydroxy carboxylate + glutathione + H(+). It participates in secondary metabolite metabolism; methylglyoxal degradation; (R)-lactate from methylglyoxal: step 2/2. Its function is as follows. Thiolesterase that catalyzes the hydrolysis of S-D-lactoyl-glutathione to form glutathione and D-lactic acid. The sequence is that of Hydroxyacylglutathione hydrolase from Photorhabdus laumondii subsp. laumondii (strain DSM 15139 / CIP 105565 / TT01) (Photorhabdus luminescens subsp. laumondii).